A 485-amino-acid polypeptide reads, in one-letter code: Leukocyte receptor cluster member 9 (485 aa).

A C3H1-type zinc finger spans residues 8-35 (SEAPAVCRFFLEGRCRFGARCRQPHPGA). A disordered region spans residues 212-247 (ETRTGLDSSLETPEVDGPTKETGLNGTTELEMPDPS).

The sequence is that of Leukocyte receptor cluster member 9 (Leng9) from Mus musculus (Mouse).